Here is an 878-residue protein sequence, read N- to C-terminus: Phosphoenolpyruvate carboxylase (878 aa).

Residues His140 and Lys545 contribute to the active site.

Belongs to the PEPCase type 1 family. Mg(2+) is required as a cofactor.

The catalysed reaction is oxaloacetate + phosphate = phosphoenolpyruvate + hydrogencarbonate. Functionally, forms oxaloacetate, a four-carbon dicarboxylic acid source for the tricarboxylic acid cycle. This is Phosphoenolpyruvate carboxylase from Pseudomonas aeruginosa (strain ATCC 15692 / DSM 22644 / CIP 104116 / JCM 14847 / LMG 12228 / 1C / PRS 101 / PAO1).